The following is a 234-amino-acid chain: Biotin transport ATP-binding protein BioM (234 aa).

One can recognise an ABC transporter domain in the interval 1–230 (MQAIDIGHVT…YIAAMQALAR (230 aa)). 35–42 (GRNGAGKS) is a binding site for ATP.

This sequence belongs to the ABC transporter superfamily. Part of a biotin transporter holocomplex composed of BioM, BioN and BioY. BioMN complexes can be readily purified, but not BioMY complexes. Only the BioMNY complex has ATPase activity.

It localises to the cell inner membrane. Its function is as follows. Required for biotin uptake under very low (pM) biotin concentrations but not under higher (nM) concentrations. The sequence is that of Biotin transport ATP-binding protein BioM (bioM) from Rhodobacter capsulatus (strain ATCC BAA-309 / NBRC 16581 / SB1003).